The primary structure comprises 166 residues: Lipoprotein signal peptidase (166 aa).

A run of 4 helical transmembrane segments spans residues 9–29, 45–65, 71–91, and 100–120; these read ASGA…FDQL, ALTS…FGFL, WQRW…CFLL, and FSLS…DRLV. Residues D126 and D144 contribute to the active site. The helical transmembrane segment at 135–155 threads the bilayer; the sequence is WHFPAFNLADSAITVGAVLLV.

This sequence belongs to the peptidase A8 family.

The protein resides in the cell inner membrane. It carries out the reaction Release of signal peptides from bacterial membrane prolipoproteins. Hydrolyzes -Xaa-Yaa-Zaa-|-(S,diacylglyceryl)Cys-, in which Xaa is hydrophobic (preferably Leu), and Yaa (Ala or Ser) and Zaa (Gly or Ala) have small, neutral side chains.. The protein operates within protein modification; lipoprotein biosynthesis (signal peptide cleavage). In terms of biological role, this protein specifically catalyzes the removal of signal peptides from prolipoproteins. This Burkholderia ambifaria (strain MC40-6) protein is Lipoprotein signal peptidase.